The primary structure comprises 63 residues: Small ribosomal subunit protein bS21 (63 aa).

The protein belongs to the bacterial ribosomal protein bS21 family.

The chain is Small ribosomal subunit protein bS21 from Parabacteroides distasonis (strain ATCC 8503 / DSM 20701 / CIP 104284 / JCM 5825 / NCTC 11152).